The following is a 331-amino-acid chain: Lipoyl synthase (331 aa).

Residues Cys-74, Cys-79, Cys-85, Cys-100, Cys-104, Cys-107, and Ser-314 each coordinate [4Fe-4S] cluster. Residues 85-303 (CFGKGTATFM…ETEAYKMGFT (219 aa)) form the Radical SAM core domain.

Belongs to the radical SAM superfamily. Lipoyl synthase family. [4Fe-4S] cluster is required as a cofactor.

It is found in the cytoplasm. It carries out the reaction [[Fe-S] cluster scaffold protein carrying a second [4Fe-4S](2+) cluster] + N(6)-octanoyl-L-lysyl-[protein] + 2 oxidized [2Fe-2S]-[ferredoxin] + 2 S-adenosyl-L-methionine + 4 H(+) = [[Fe-S] cluster scaffold protein] + N(6)-[(R)-dihydrolipoyl]-L-lysyl-[protein] + 4 Fe(3+) + 2 hydrogen sulfide + 2 5'-deoxyadenosine + 2 L-methionine + 2 reduced [2Fe-2S]-[ferredoxin]. It functions in the pathway protein modification; protein lipoylation via endogenous pathway; protein N(6)-(lipoyl)lysine from octanoyl-[acyl-carrier-protein]: step 2/2. Catalyzes the radical-mediated insertion of two sulfur atoms into the C-6 and C-8 positions of the octanoyl moiety bound to the lipoyl domains of lipoate-dependent enzymes, thereby converting the octanoylated domains into lipoylated derivatives. In Leptothrix cholodnii (strain ATCC 51168 / LMG 8142 / SP-6) (Leptothrix discophora (strain SP-6)), this protein is Lipoyl synthase.